Here is a 366-residue protein sequence, read N- to C-terminus: tRNA/tmRNA (uracil-C(5))-methyltransferase (366 aa).

S-adenosyl-L-methionine is bound by residues Gln-190, Tyr-218, Asn-223, Glu-239, and Asp-299. Cys-324 functions as the Nucleophile in the catalytic mechanism. Glu-358 serves as the catalytic Proton acceptor.

It belongs to the class I-like SAM-binding methyltransferase superfamily. RNA M5U methyltransferase family. TrmA subfamily.

The catalysed reaction is uridine(54) in tRNA + S-adenosyl-L-methionine = 5-methyluridine(54) in tRNA + S-adenosyl-L-homocysteine + H(+). It catalyses the reaction uridine(341) in tmRNA + S-adenosyl-L-methionine = 5-methyluridine(341) in tmRNA + S-adenosyl-L-homocysteine + H(+). Dual-specificity methyltransferase that catalyzes the formation of 5-methyluridine at position 54 (m5U54) in all tRNAs, and that of position 341 (m5U341) in tmRNA (transfer-mRNA). The polypeptide is tRNA/tmRNA (uracil-C(5))-methyltransferase (Salmonella paratyphi C (strain RKS4594)).